The sequence spans 817 residues: Leucine--tRNA ligase (817 aa).

The 'HIGH' region motif lies at 42-52 (PYPSGKLHMGH). A 'KMSKS' region motif is present at residues 576–580 (KMSKS). K579 is an ATP binding site.

This sequence belongs to the class-I aminoacyl-tRNA synthetase family.

Its subcellular location is the cytoplasm. The enzyme catalyses tRNA(Leu) + L-leucine + ATP = L-leucyl-tRNA(Leu) + AMP + diphosphate. This is Leucine--tRNA ligase from Methylobacillus flagellatus (strain ATCC 51484 / DSM 6875 / VKM B-1610 / KT).